The sequence spans 116 residues: Large ribosomal subunit protein bL19 (116 aa).

This sequence belongs to the bacterial ribosomal protein bL19 family.

Functionally, this protein is located at the 30S-50S ribosomal subunit interface and may play a role in the structure and function of the aminoacyl-tRNA binding site. This is Large ribosomal subunit protein bL19 from Haemophilus influenzae (strain 86-028NP).